Here is a 220-residue protein sequence, read N- to C-terminus: Protein-L-isoaspartate O-methyltransferase (220 aa).

S70 is a catalytic residue.

Belongs to the methyltransferase superfamily. L-isoaspartyl/D-aspartyl protein methyltransferase family.

It is found in the cytoplasm. The catalysed reaction is [protein]-L-isoaspartate + S-adenosyl-L-methionine = [protein]-L-isoaspartate alpha-methyl ester + S-adenosyl-L-homocysteine. Its function is as follows. Catalyzes the methyl esterification of L-isoaspartyl residues in peptides and proteins that result from spontaneous decomposition of normal L-aspartyl and L-asparaginyl residues. It plays a role in the repair and/or degradation of damaged proteins. In Halorhodospira halophila (strain DSM 244 / SL1) (Ectothiorhodospira halophila (strain DSM 244 / SL1)), this protein is Protein-L-isoaspartate O-methyltransferase.